A 428-amino-acid polypeptide reads, in one-letter code: Endoplasmic reticulum junction formation protein lunapark (428 aa).

Residue glycine 2 is the site of N-myristoyl glycine attachment. The Cytoplasmic portion of the chain corresponds to 2–45 (GGLFSRWRTKPSTVEVLESIDKEIQALEEFREKNQRLQKLWVGR). Positions 16 to 41 (EVLESIDKEIQALEEFREKNQRLQKL) form a coiled coil. A helical membrane pass occupies residues 46–66 (LILYSSVLYLFTCLIVYLWYL). Over 67–77 (PDEFTARLAMT) the chain is Lumenal. A helical transmembrane segment spans residues 78 to 98 (LPFFAFPLIIWSIRTVIIFFF). Over 99-428 (SKRTERNNEA…ELSGESLTAE (330 aa)) the chain is Cytoplasmic. A coiled-coil region spans residues 102 to 128 (TERNNEALDDLKSQRKKILEEVMEKET). Residues serine 114, serine 153, serine 177, serine 182, and serine 194 each carry the phosphoserine modification. The segment at 143–247 (SKKAKECEPP…HPPGPPLARP (105 aa)) is disordered. Pro residues predominate over residues 185-198 (QGPPPQVPVSPGPP). Phosphothreonine occurs at positions 211 and 213. Phosphoserine occurs at positions 217 and 227. The C4-type; plays a role in ER morphology zinc finger occupies 276–301 (CQQCFSHNGMALKEEFEYIAFRCAYC). Phosphoserine occurs at positions 321, 353, and 384. The disordered stretch occupies residues 356 to 428 (HDVLDDNTEQ…ELSGESLTAE (73 aa)). The span at 386–401 (SEEPEEKQETENEEAS) shows a compositional bias: acidic residues. A Phosphoserine modification is found at serine 414.

This sequence belongs to the lunapark family. As to quaternary structure, homodimer; homodimerization requires the C4-type zinc finger motif and decreases during mitosis in a phosphorylation-dependent manner. Post-translationally, myristoylated; myristoylation is necessary for the endoplasmic reticulum (ER) three-way ER tubular junction formation, but is not required neither for membrane translocation, membrane topology formation, nor for the specific localization to ER membranes. In terms of processing, phosphorylated. Phosphorylation occurs at Ser-177, Ser-182, Ser-217, Ser-227, Ser-321 and Ser-384 during interphase. Phosphorylation occurs at Ser-114, Ser-153, Ser-194, Thr-211 and Ser-353 during mitosis; these phosphorylations reduce both its homodimerization and the ER three-way tubular junction formation. Subject to proteasomal degradation following phosphorylation during mitosis. In terms of tissue distribution, expressed in neural precursor cells, where it is detected at the growth-cone-like structure and branching sites of neurite-like processes.

The protein resides in the endoplasmic reticulum membrane. Its function is as follows. Endoplasmic reticulum (ER)-shaping membrane protein that plays a role in determining ER morphology. Involved in the stabilization of nascent three-way ER tubular junctions within the ER network. May also play a role as a curvature-stabilizing protein within the three-way ER tubular junction network. May be involved in limb development. Is involved in central nervous system development. This is Endoplasmic reticulum junction formation protein lunapark from Homo sapiens (Human).